Here is a 154-residue protein sequence, read N- to C-terminus: Polyketide synthase CurC (154 aa).

The Cupin type-2 domain occupies 42–108 (LAIMRPGERI…NVGDEEARMV (67 aa)). The tract at residues 133-154 (DVKAYPLVQEESGRPERPGVLS) is disordered. The segment covering 143-154 (ESGRPERPGVLS) has biased composition (basic and acidic residues).

This sequence belongs to the SchB/CurC family.

It participates in antibiotic biosynthesis; curamycin biosynthesis. The chain is Polyketide synthase CurC (curC) from Streptomyces cyaneus (Streptomyces curacoi).